The sequence spans 94 residues: Integration host factor subunit beta (94 aa).

Belongs to the bacterial histone-like protein family. Heterodimer of an alpha and a beta chain.

Functionally, this protein is one of the two subunits of integration host factor, a specific DNA-binding protein that functions in genetic recombination as well as in transcriptional and translational control. This is Integration host factor subunit beta (ihfB) from Dickeya dadantii (strain 3937) (Erwinia chrysanthemi (strain 3937)).